The chain runs to 285 residues: Methyl-CpG-binding domain protein 3 (285 aa).

The region spanning 1–69 (MERKRWECPA…STFDFRTGKM (69 aa)) is the MBD domain. Residue serine 56 is modified to Phosphoserine. A Glycyl lysine isopeptide (Lys-Gly) (interchain with G-Cter in SUMO2) cross-link involves residue lysine 73. A Phosphoserine modification is found at serine 85. Glycyl lysine isopeptide (Lys-Gly) (interchain with G-Cter in SUMO2) cross-links involve residues lysine 90 and lysine 92. Serine 144 carries the phosphoserine modification. Residues 221–279 (TDDDIRKQEELVQQVRKRLEEALMADMLAHVEELARDGEAPLDKACAEEEEEEEEEEEE) are a coiled coil. The span at 255–267 (ARDGEAPLDKACA) shows a compositional bias: basic and acidic residues. Positions 255 to 285 (ARDGEAPLDKACAEEEEEEEEEEEEPEPERV) are disordered. The span at 268–285 (EEEEEEEEEEEEPEPERV) shows a compositional bias: acidic residues.

Heterodimer (via N-terminus) with MBD2. Component of the MeCP1 histone deacetylase complex. Component of the nucleosome remodeling and deacetylase (NuRD) repressor complex, composed of core proteins MTA1, MTA2, MTA3, RBBP4, RBBP7, HDAC1, HDAC2, MBD2, MBD3, and peripherally associated proteins CDK2AP1, CDK2AP2, GATAD2A, GATAD2B, CHD3, CHD4 and CHD5. The exact stoichiometry of the NuRD complex is unknown, and some subunits such as MBD2 and MBD3, GATAD2A and GATAD2B, and CHD3, CHD4 and CHD5 define mutually exclusive NuRD complexes. Interacts with MBD3L2 (via N-terminus); the interaction is direct. Interacts with BCL6. Interacts with CDK2AP1. Interacts with HDAC1. Interacts with MTA2. Interacts with DNMT1. Interacts with GATAD2A. Interacts with GATAD2B. Does not interact with PWWP2A. Does not interact with PWWP2B. As to expression, highly expressed in brain, heart, kidney, liver, lung, skeletal muscle, spleen and testis. Detected at lower levels in embryonic stem cells.

Its subcellular location is the nucleus. It is found in the chromosome. Acts as a component of the histone deacetylase NuRD complex which participates in the remodeling of chromatin. Acts as transcriptional repressor and plays a role in gene silencing. Does not bind methylated DNA by itself. Binds to a lesser degree DNA containing unmethylated CpG dinucleotides. Recruits histone deacetylases and DNA methyltransferases. The chain is Methyl-CpG-binding domain protein 3 (Mbd3) from Mus musculus (Mouse).